We begin with the raw amino-acid sequence, 318 residues long: MASKSRHYLNQPWYIILFIFVLSLVAGTLLSSVSYVLSPIQKQAAEFDRNQQMLMAAQIISYDNKFQIYAEGDWQPAVYNTKKQILEKSSSTPPQVTVATLCSYFQNFVRVLLTDSQGNLSSFEDHNLNLEEFLSHPTSSVQDHSLHVIYAILANDESSKKLSSSQVAKNPVSIESIILPIKGFGLWGPIYGFLALEKDGNTVLGTCWYQHGETPGLGANITNPQWQQNFRGKKVFLASSSGETDFAKTTLGLEVIKGSVSALLGDSPKANSAVDGISGATLTCNGVTEAFANSLAPYRPLLTFFANLNSSGESHDNQ.

A helical transmembrane segment spans residues 13–33 (WYIILFIFVLSLVAGTLLSSV). Position 281 is an FMN phosphoryl threonine (threonine 281).

It belongs to the NqrC family. As to quaternary structure, composed of six subunits; NqrA, NqrB, NqrC, NqrD, NqrE and NqrF. Requires FMN as cofactor.

Its subcellular location is the cell inner membrane. It catalyses the reaction a ubiquinone + n Na(+)(in) + NADH + H(+) = a ubiquinol + n Na(+)(out) + NAD(+). Functionally, NQR complex catalyzes the reduction of ubiquinone-1 to ubiquinol by two successive reactions, coupled with the transport of Na(+) ions from the cytoplasm to the periplasm. NqrA to NqrE are probably involved in the second step, the conversion of ubisemiquinone to ubiquinol. The chain is Na(+)-translocating NADH-quinone reductase subunit C from Chlamydia muridarum (strain MoPn / Nigg).